The primary structure comprises 388 residues: Succinate--CoA ligase [ADP-forming] subunit beta (388 aa).

The ATP-grasp domain occupies 9 to 244 (KQLFARYGLP…QSQEDPREAQ (236 aa)). ATP contacts are provided by residues K46, 53–55 (GRG), E99, T102, and E107. Residues N199 and D213 each coordinate Mg(2+). Substrate is bound by residues N264 and 321-323 (GIV).

Belongs to the succinate/malate CoA ligase beta subunit family. Heterotetramer of two alpha and two beta subunits. It depends on Mg(2+) as a cofactor.

It catalyses the reaction succinate + ATP + CoA = succinyl-CoA + ADP + phosphate. The enzyme catalyses GTP + succinate + CoA = succinyl-CoA + GDP + phosphate. It functions in the pathway carbohydrate metabolism; tricarboxylic acid cycle; succinate from succinyl-CoA (ligase route): step 1/1. Its function is as follows. Succinyl-CoA synthetase functions in the citric acid cycle (TCA), coupling the hydrolysis of succinyl-CoA to the synthesis of either ATP or GTP and thus represents the only step of substrate-level phosphorylation in the TCA. The beta subunit provides nucleotide specificity of the enzyme and binds the substrate succinate, while the binding sites for coenzyme A and phosphate are found in the alpha subunit. The protein is Succinate--CoA ligase [ADP-forming] subunit beta of Klebsiella pneumoniae (strain 342).